Reading from the N-terminus, the 382-residue chain is Sialidase (382 aa).

Substrate is bound at residue R37. C42 and C103 form a disulfide bridge. D62 functions as the Proton acceptor in the catalytic mechanism. BNR repeat units follow at residues 71-82 (ARSTDGGKTWNK), 145-156 (YKSTDDGVTFSK), and 210-220 (IYSTDGITWSL). R246 is a binding site for substrate. One copy of the BNR 4 repeat lies at 254 to 265 (FETKDFGKTWTE). R309 provides a ligand contact to substrate. Y342 serves as the catalytic Nucleophile. Residue E361 is part of the active site.

This sequence belongs to the glycosyl hydrolase 33 family. Monomer.

The catalysed reaction is Hydrolysis of alpha-(2-&gt;3)-, alpha-(2-&gt;6)-, alpha-(2-&gt;8)- glycosidic linkages of terminal sialic acid residues in oligosaccharides, glycoproteins, glycolipids, colominic acid and synthetic substrates.. Cleaves the terminal sialic acid (N-acetyl neuraminic acid) from carbohydrate chains in glycoproteins providing free sialic acid which can be used as carbon and energy sources. Sialidases have been suggested to be pathogenic factors in microbial infections. In Salmonella typhimurium (strain LT2 / SGSC1412 / ATCC 700720), this protein is Sialidase (nanH).